Consider the following 525-residue polypeptide: Retinoblastoma-binding-like protein E (525 aa).

5 WD repeats span residues 25 to 66 (PKNI…IVRT), 69 to 108 (HHTG…ILYS), 222 to 261 (SSNT…LYQQ), 267 to 312 (DSVN…KDLE), and 313 to 352 (GPKE…NWSS). Disordered regions lie at residues 371–398 (DEFD…RNPY) and 462–525 (EKYQ…KKRK). The segment covering 383-392 (QEVNNNNNNN) has biased composition (low complexity). Positions 462–471 (EKYQKDKEDS) are enriched in basic and acidic residues. A compositionally biased stretch (low complexity) spans 472–500 (SSTTSNSTISSSSSPSPSSSSTTTTTTTS). Residues 501–525 (QKKDETQKKEKSTKKERNSDSKKRK) show a composition bias toward basic and acidic residues.

It localises to the nucleus. In terms of biological role, involved in mono-, di- and trimethylation at 'Lys-4' of histone H3. Histone H3 'Lys-4' methylation represents a specific tag for epigenetic transcriptional activation. The sequence is that of Retinoblastoma-binding-like protein E from Dictyostelium discoideum (Social amoeba).